A 341-amino-acid chain; its full sequence is Galactofuranose transporter permease protein YtfT (341 aa).

At 1–25 the chain is on the cytoplasmic side; sequence MMPQSLPDTTTPKRRFRWPTGMPQL. The chain crosses the membrane as a helical span at residues 26 to 46; that stretch reads VALLLVLLVDSLVAPHFWQVV. Topologically, residues 47–65 are periplasmic; the sequence is LQDGRLFGSPIDILNRAAP. 2 helical membrane-spanning segments follow: residues 66-86 and 87-107; these read VALLAIGMTLVIATGGIDLSV and GAVMAIAGATTAAMTVAGFSL. P108 is a topological domain (periplasmic). Residues 109–129 form a helical membrane-spanning segment; sequence IVLLSALGTGILAGLWNGILV. The Cytoplasmic segment spans residues 130 to 136; it reads AILKIQP. The helical transmembrane segment at 137–157 threads the bilayer; that stretch reads FVATLILMVAGRGVAQLITAG. Residues 158-174 lie on the Periplasmic side of the membrane; it reads QIVTFNSPDLSWFGSGS. A helical transmembrane segment spans residues 175–195; it reads LLFLPTPVIIAVLTLILFWLL. The Cytoplasmic segment spans residues 196–223; it reads TRKTALGMFIEAVGINIRAAKNAGVNTR. Residues 224 to 244 form a helical membrane-spanning segment; that stretch reads IIVMLTYVLSGLCAAIAGIIV. Topologically, residues 245-255 are periplasmic; that stretch reads AADIRGADANN. The helical transmembrane segment at 256 to 276 threads the bilayer; the sequence is AGLWLELDAILAVVIGGGSLM. Topologically, residues 277-281 are cytoplasmic; that stretch reads GGRFN. 2 consecutive transmembrane segments (helical) span residues 282-302 and 303-323; these read LLLSVVGALIIQGMNTGILLS and GFPPEMNQVVKAVVVLCVLIV. The Cytoplasmic segment spans residues 324–341; sequence QSQRFISLIKGVRSRDKT.

Belongs to the binding-protein-dependent transport system permease family. AraH/RbsC subfamily. As to quaternary structure, the complex is composed of two ATP-binding proteins (YtfR), two transmembrane proteins (YtfT and YjfF) and a solute-binding protein (YtfQ).

Its subcellular location is the cell inner membrane. Functionally, part of the ABC transporter complex YtfQRT-YjfF involved in galactofuranose transport. Probably responsible for the translocation of the substrate across the membrane. This is Galactofuranose transporter permease protein YtfT (ytfT) from Escherichia coli (strain K12).